Consider the following 535-residue polypeptide: Alcohol O-acetyltransferase 2 (535 aa).

Residues glycine 19–arginine 36 are membrane association. Catalysis depends on charge relay system residues histidine 189 and aspartate 193. The membrane association stretch occupies residues arginine 515 to phenylalanine 532.

The protein belongs to the ATF1 alcohol acetyltransferase family.

The protein resides in the lipid droplet. Its subcellular location is the endoplasmic reticulum membrane. The catalysed reaction is an aliphatic alcohol + acetyl-CoA = an acetyl ester + CoA. Can use acetyl-CoA to synthesize acetate esters from various alcohols, producing ethyl acetate, isoamyl acetate, isobutyl acetate, butyl acetate, hexyl acetate, heptyl acetate and octyl acetate. ATF2 seems to play only a minor role in the acetate ester synthesis, compared to ATF1. Plays an active role in the detoxification hydroxysteroids and possibly certain phytochemicals, in association with the efflux pumps PDR5 and SNQ2. The polypeptide is Alcohol O-acetyltransferase 2 (Saccharomyces cerevisiae (strain ATCC 204508 / S288c) (Baker's yeast)).